Here is a 425-residue protein sequence, read N- to C-terminus: G protein-activated inward rectifier potassium channel 2 (425 aa).

Topologically, residues 1–91 are cytoplasmic; it reads MTMAKLTESM…ILTTLVDLKW (91 aa). A phosphoserine mark is found at Ser-18 and Ser-25. The helical transmembrane segment at 92–116 threads the bilayer; the sequence is RFNLLIFVMVYTVTWLFFGMIWWLI. Residues 117–140 lie on the Extracellular side of the membrane; it reads AYIRGDMDHVEDPSWTPCVTNLNG. The helical; Pore-forming intramembrane region spans 141 to 152; the sequence is FVSAFLFSIETE. The pore-forming intramembrane region spans 153-159; sequence TTIGYGY. The Selectivity filter motif lies at 154–159; it reads TIGYGY. Residues 160–168 are Extracellular-facing; it reads RVITDKCPE. Residues 169–190 form a helical membrane-spanning segment; it reads GIILLLIQSVLGSIVNAFMVGC. Residues 191–425 are Cytoplasmic-facing; that stretch reads MFVKISQPKK…VANLENESKV (235 aa). Residues 392–425 are disordered; sequence NQHAELETEEEEKNPEEQTERNGDVANLENESKV. The PDZ-binding motif lies at 422–425; the sequence is ESKV.

The protein belongs to the inward rectifier-type potassium channel (TC 1.A.2.1) family. KCNJ6 subfamily. As to quaternary structure, associates with KCNJ3/GIRK1 or KCNJ5/GRIK4 to form a G-protein-activated heteromultimer pore-forming unit. The resulting inward current is much larger. Interacts (via PDZ-binding motif) with SNX27 (via PDZ domain); the interaction is required when endocytosed to prevent degradation in lysosomes and promote recycling to the plasma membrane. As to expression, expressed in insulin-secreting cells and brain.

The protein localises to the membrane. It carries out the reaction K(+)(in) = K(+)(out). Activated by phosphatidylinositol 4,5 biphosphate (PtdIns(4,5)P2). In terms of biological role, inward rectifier potassium channels are characterized by a greater tendency to allow potassium to flow into the cell rather than out of it. Their voltage dependence is regulated by the concentration of extracellular potassium; as external potassium is raised, the voltage range of the channel opening shifts to more positive voltages. The inward rectification is mainly due to the blockage of outward current by internal magnesium. This potassium channel may be involved in the regulation of insulin secretion by glucose and/or neurotransmitters acting through G-protein-coupled receptors. The sequence is that of G protein-activated inward rectifier potassium channel 2 (KCNJ6) from Mesocricetus auratus (Golden hamster).